A 368-amino-acid polypeptide reads, in one-letter code: Agmatine deiminase (368 aa).

The active-site Amidino-cysteine intermediate is C357.

This sequence belongs to the agmatine deiminase family. As to quaternary structure, homodimer.

It catalyses the reaction agmatine + H2O = N-carbamoylputrescine + NH4(+). The protein operates within amine and polyamine biosynthesis; putrescine biosynthesis via agmatine pathway; N-carbamoylputrescine from agmatine: step 1/1. Mediates the hydrolysis of agmatine into N-carbamoylputrescine in the arginine decarboxylase (ADC) pathway of putrescine biosynthesis, a basic polyamine. This chain is Agmatine deiminase, found in Pseudomonas aeruginosa (strain UCBPP-PA14).